We begin with the raw amino-acid sequence, 400 residues long: Enoyl-[acyl-carrier-protein] reductase [NADH] (400 aa).

NAD(+) is bound by residues Gly48 to Tyr53, Phe74 to Glu75, Asp111 to Ala112, and Leu139 to Ala140. Residue Tyr225 participates in substrate binding. The Proton donor role is filled by Tyr235. NAD(+) is bound by residues Lys244 and Val273–Thr275.

This sequence belongs to the TER reductase family. In terms of assembly, monomer.

The catalysed reaction is a 2,3-saturated acyl-[ACP] + NAD(+) = a (2E)-enoyl-[ACP] + NADH + H(+). The protein operates within lipid metabolism; fatty acid biosynthesis. Involved in the final reduction of the elongation cycle of fatty acid synthesis (FAS II). Catalyzes the reduction of a carbon-carbon double bond in an enoyl moiety that is covalently linked to an acyl carrier protein (ACP). The protein is Enoyl-[acyl-carrier-protein] reductase [NADH] of Aliivibrio fischeri (strain MJ11) (Vibrio fischeri).